Reading from the N-terminus, the 470-residue chain is Iron-sulfur cluster assembly protein SufB (470 aa).

The protein belongs to the iron-sulfur cluster assembly SufBD family. As to quaternary structure, component of a complex composed of SufB, SufC and SufD in a stoichiometric ratio of 1:2:1. Interacts with SufC. Interacts with SufD.

Its pathway is cofactor biosynthesis; iron-sulfur cluster biosynthesis. Participates in the sulfur mobilization (SUF) pathway for iron-sulfur (Fe-S) cluster biogenesis. As part of a complex consisting of SufB-SufC(2)-SufD, involved in assembly of [4Fe-4S] clusters. Exhibits ATPase activity. The sequence is that of Iron-sulfur cluster assembly protein SufB from Plasmodium falciparum (isolate 3D7).